The primary structure comprises 728 residues: Polyribonucleotide nucleotidyltransferase (728 aa).

Residues Asp-488 and Asp-494 each coordinate Mg(2+). A KH domain is found at 555–614; it reads PRMITMKIHPDKIREVIGKGGSTIQALTKETGTTIDIQEDGTITIASTSTDGMAEAKRRI. The S1 motif domain maps to 624–692; that stretch reads GKIYNGTVLK…EKGRLRLSLK (69 aa). Residues 702–728 form a disordered region; sequence ISPVNAGEAAPAPAPAAAPATPSDQQQ. Positions 710 to 721 are enriched in low complexity; sequence AAPAPAPAAAPA.

The protein belongs to the polyribonucleotide nucleotidyltransferase family. Mg(2+) is required as a cofactor.

Its subcellular location is the cytoplasm. It carries out the reaction RNA(n+1) + phosphate = RNA(n) + a ribonucleoside 5'-diphosphate. Functionally, involved in mRNA degradation. Catalyzes the phosphorolysis of single-stranded polyribonucleotides processively in the 3'- to 5'-direction. The chain is Polyribonucleotide nucleotidyltransferase from Cupriavidus pinatubonensis (strain JMP 134 / LMG 1197) (Cupriavidus necator (strain JMP 134)).